Here is a 352-residue protein sequence, read N- to C-terminus: Putative [LysW]-L-2-aminoadipate/[LysW]-L-glutamate phosphate reductase (352 aa).

Residues 10–13 (SGFT) and 34–36 (SRR) contribute to the NADP(+) site. C151 is a catalytic residue. N319 is an NADP(+) binding site.

Belongs to the NAGSA dehydrogenase family. Type 1 subfamily. LysY sub-subfamily.

Its subcellular location is the cytoplasm. It carries out the reaction [amino-group carrier protein]-C-terminal-N-(1-carboxy-5-oxopentan-1-yl)-L-glutamine + phosphate + NADP(+) = [amino-group carrier protein]-C-terminal-N-(1-carboxy-5-phosphooxy-5-oxopentan-1-yl)-L-glutamine + NADPH + H(+). The enzyme catalyses [amino-group carrier protein]-C-terminal-gamma-(L-glutamyl-5-semialdehyde)-L-glutamate + phosphate + NADP(+) = [amino-group carrier protein]-C-terminal-gamma-(5-phospho-L-glutamyl)-L-glutamate + NADPH + H(+). It participates in amino-acid biosynthesis; L-lysine biosynthesis via AAA pathway; L-lysine from L-alpha-aminoadipate (Thermus route): step 3/5. It functions in the pathway amino-acid biosynthesis; L-arginine biosynthesis. In terms of biological role, involved in both the arginine and lysine biosynthetic pathways. The protein is Putative [LysW]-L-2-aminoadipate/[LysW]-L-glutamate phosphate reductase of Pyrobaculum islandicum (strain DSM 4184 / JCM 9189 / GEO3).